The chain runs to 62 residues: Large ribosomal subunit protein bL33c (62 aa).

It belongs to the bacterial ribosomal protein bL33 family.

The protein localises to the plastid. The protein resides in the chloroplast. This Cyanidioschyzon merolae (strain NIES-3377 / 10D) (Unicellular red alga) protein is Large ribosomal subunit protein bL33c.